Here is a 545-residue protein sequence, read N- to C-terminus: Zinc finger protein 697 (545 aa).

Positions 1–143 (MKQEDNQGVC…EQPAPPVLPW (143 aa)) are disordered. Residue Lys-2 forms a Glycyl lysine isopeptide (Lys-Gly) (interchain with G-Cter in SUMO2) linkage. The span at 23–36 (DFEDSEDREGDPEE) shows a compositional bias: acidic residues. Residues 45-55 (DTNKREGHPEP) are compositionally biased toward basic and acidic residues. 2 stretches are compositionally biased toward acidic residues: residues 79-94 (LSEE…EDDQ) and 118-135 (EDDD…EEEQ). C2H2-type zinc fingers lie at residues 189 to 211 (TICP…QRIH), 261 to 283 (FRCG…LRLH), 289 to 311 (NLCA…RRLH), 317 to 339 (YPCP…RRAH), 353 to 375 (FACG…QRIH), 381 to 403 (HGCG…QRVH), 409 to 431 (YMCS…KRTH), 437 to 459 (YVCR…LRVH), 465 to 487 (FRCG…QRTH), 493 to 515 (YTCI…RRIH), and 521 to 543 (HKCA…QKLH).

The protein belongs to the krueppel C2H2-type zinc-finger protein family.

The protein localises to the nucleus. RNA-interacting protein with a high number of miRNA targets. Acts as a damage-induced regulator of muscle remodeling by mediating the interferon gamma response in muscle cells. This is Zinc finger protein 697 from Homo sapiens (Human).